The primary structure comprises 207 residues: Guanylate kinase (207 aa).

A Guanylate kinase-like domain is found at 4–184; sequence GTLYIVSAPS…ALTDLKTIIR (181 aa). 11-18 is a binding site for ATP; sequence APSGAGKS.

Belongs to the guanylate kinase family.

The protein localises to the cytoplasm. It carries out the reaction GMP + ATP = GDP + ADP. Essential for recycling GMP and indirectly, cGMP. The polypeptide is Guanylate kinase (Escherichia coli O6:K15:H31 (strain 536 / UPEC)).